The primary structure comprises 465 residues: Uronate isomerase (465 aa).

This sequence belongs to the metallo-dependent hydrolases superfamily. Uronate isomerase family.

The catalysed reaction is D-glucuronate = D-fructuronate. It catalyses the reaction aldehydo-D-galacturonate = keto-D-tagaturonate. The protein operates within carbohydrate metabolism; pentose and glucuronate interconversion. This Bacillus velezensis (strain DSM 23117 / BGSC 10A6 / LMG 26770 / FZB42) (Bacillus amyloliquefaciens subsp. plantarum) protein is Uronate isomerase.